A 271-amino-acid polypeptide reads, in one-letter code: Acyl-[acyl-carrier-protein]--UDP-N-acetylglucosamine O-acyltransferase (271 aa).

The protein belongs to the transferase hexapeptide repeat family. LpxA subfamily. In terms of assembly, homotrimer.

Its subcellular location is the cytoplasm. It carries out the reaction a (3R)-hydroxyacyl-[ACP] + UDP-N-acetyl-alpha-D-glucosamine = a UDP-3-O-[(3R)-3-hydroxyacyl]-N-acetyl-alpha-D-glucosamine + holo-[ACP]. It participates in glycolipid biosynthesis; lipid IV(A) biosynthesis; lipid IV(A) from (3R)-3-hydroxytetradecanoyl-[acyl-carrier-protein] and UDP-N-acetyl-alpha-D-glucosamine: step 1/6. In terms of biological role, involved in the biosynthesis of lipid A, a phosphorylated glycolipid that anchors the lipopolysaccharide to the outer membrane of the cell. This chain is Acyl-[acyl-carrier-protein]--UDP-N-acetylglucosamine O-acyltransferase, found in Sulfurihydrogenibium sp. (strain YO3AOP1).